We begin with the raw amino-acid sequence, 106 residues long: UPF0145 protein CLL_A2504 (106 aa).

The protein belongs to the UPF0145 family.

The sequence is that of UPF0145 protein CLL_A2504 from Clostridium botulinum (strain Eklund 17B / Type B).